We begin with the raw amino-acid sequence, 537 residues long: Phosphoenolpyruvate carboxykinase (ATP) (537 aa).

Substrate is bound by residues Arg-61, Tyr-195, and Lys-201. ATP-binding positions include Lys-201, His-220, and 236 to 244; that span reads GLSGTGKTT. Lys-201 and His-220 together coordinate Mn(2+). Asp-257 provides a ligand contact to Mn(2+). Positions 285, 323, and 448 each coordinate ATP. Position 323 (Arg-323) interacts with substrate.

The protein belongs to the phosphoenolpyruvate carboxykinase (ATP) family. Mn(2+) is required as a cofactor.

The protein localises to the cytoplasm. It carries out the reaction oxaloacetate + ATP = phosphoenolpyruvate + ADP + CO2. Its pathway is carbohydrate biosynthesis; gluconeogenesis. Involved in the gluconeogenesis. Catalyzes the conversion of oxaloacetate (OAA) to phosphoenolpyruvate (PEP) through direct phosphoryl transfer between the nucleoside triphosphate and OAA. The polypeptide is Phosphoenolpyruvate carboxykinase (ATP) (Rhodopseudomonas palustris (strain HaA2)).